Here is a 155-residue protein sequence, read N- to C-terminus: MDKECKSNLESLLQGVAKEFNLKIHSLDILTNQNPIIVKIIICKTNKDDITLDDCSRFNNPAISVIENSNLLNCSYVLEISSQGVSDELTSERDFKTFKGFPVNVELNQKNSQIKFLNGLLYEKSKDYLAINIKGKIKKIPFNEVLKVSLCTFKD.

The protein belongs to the RimP family.

It localises to the cytoplasm. Functionally, required for maturation of 30S ribosomal subunits. The protein is Ribosome maturation factor RimP of Prochlorococcus marinus subsp. pastoris (strain CCMP1986 / NIES-2087 / MED4).